A 257-amino-acid chain; its full sequence is 24 kDa outer membrane protein (257 aa).

A signal peptide spans 1–21; sequence MKNKSKLLACCLMALPISSFS.

It belongs to the MipA/OmpV family.

The protein localises to the cell outer membrane. The sequence is that of 24 kDa outer membrane protein from Pasteurella multocida (strain Pm70).